We begin with the raw amino-acid sequence, 385 residues long: Polyketide synthase 1 (385 aa).

Cys-157 is an active-site residue.

The protein belongs to the thiolase-like superfamily. Chalcone/stilbene synthases family. As to expression, expressed in glandular trichomes.

Its subcellular location is the cytoplasm. In terms of biological role, polyketide synthase responsible for the biosynthesis of secondary metabolites. In Cannabis sativa (Hemp), this protein is Polyketide synthase 1 (PKSG1).